The following is a 337-amino-acid chain: Holliday junction branch migration complex subunit RuvB (337 aa).

Residues 4–184 (ADRLIAPAAI…FGIVQRLEFY (181 aa)) form a large ATPase domain (RuvB-L) region. ATP is bound by residues Ile23, Arg24, Gly65, Lys68, Thr69, Thr70, 131 to 133 (EDY), Arg174, Tyr184, and Arg221. Mg(2+) is bound at residue Thr69. Residues 185 to 255 (KVEDLAHIVG…IAAQALDMLD (71 aa)) form a small ATPAse domain (RuvB-S) region. Residues 258-337 (NAGFDYMDRK…FGLTTPERQG (80 aa)) form a head domain (RuvB-H) region. DNA-binding residues include Arg313 and Arg318.

It belongs to the RuvB family. Homohexamer. Forms an RuvA(8)-RuvB(12)-Holliday junction (HJ) complex. HJ DNA is sandwiched between 2 RuvA tetramers; dsDNA enters through RuvA and exits via RuvB. An RuvB hexamer assembles on each DNA strand where it exits the tetramer. Each RuvB hexamer is contacted by two RuvA subunits (via domain III) on 2 adjacent RuvB subunits; this complex drives branch migration. In the full resolvosome a probable DNA-RuvA(4)-RuvB(12)-RuvC(2) complex forms which resolves the HJ.

The protein localises to the cytoplasm. It carries out the reaction ATP + H2O = ADP + phosphate + H(+). In terms of biological role, the RuvA-RuvB-RuvC complex processes Holliday junction (HJ) DNA during genetic recombination and DNA repair, while the RuvA-RuvB complex plays an important role in the rescue of blocked DNA replication forks via replication fork reversal (RFR). RuvA specifically binds to HJ cruciform DNA, conferring on it an open structure. The RuvB hexamer acts as an ATP-dependent pump, pulling dsDNA into and through the RuvAB complex. RuvB forms 2 homohexamers on either side of HJ DNA bound by 1 or 2 RuvA tetramers; 4 subunits per hexamer contact DNA at a time. Coordinated motions by a converter formed by DNA-disengaged RuvB subunits stimulates ATP hydrolysis and nucleotide exchange. Immobilization of the converter enables RuvB to convert the ATP-contained energy into a lever motion, pulling 2 nucleotides of DNA out of the RuvA tetramer per ATP hydrolyzed, thus driving DNA branch migration. The RuvB motors rotate together with the DNA substrate, which together with the progressing nucleotide cycle form the mechanistic basis for DNA recombination by continuous HJ branch migration. Branch migration allows RuvC to scan DNA until it finds its consensus sequence, where it cleaves and resolves cruciform DNA. The polypeptide is Holliday junction branch migration complex subunit RuvB (Tolumonas auensis (strain DSM 9187 / NBRC 110442 / TA 4)).